The sequence spans 38 residues: MTQSNPNEQNVELNRTSLYWGLLLIFVLAVLFSNYSFN.

The chain crosses the membrane as a helical span at residues 17 to 37 (SLYWGLLLIFVLAVLFSNYSF).

This sequence belongs to the PsbL family. In terms of assembly, PSII is composed of 1 copy each of membrane proteins PsbA, PsbB, PsbC, PsbD, PsbE, PsbF, PsbH, PsbI, PsbJ, PsbK, PsbL, PsbM, PsbT, PsbX, PsbY, PsbZ, Psb30/Ycf12, at least 3 peripheral proteins of the oxygen-evolving complex and a large number of cofactors. It forms dimeric complexes.

Its subcellular location is the plastid. The protein resides in the chloroplast thylakoid membrane. One of the components of the core complex of photosystem II (PSII). PSII is a light-driven water:plastoquinone oxidoreductase that uses light energy to abstract electrons from H(2)O, generating O(2) and a proton gradient subsequently used for ATP formation. It consists of a core antenna complex that captures photons, and an electron transfer chain that converts photonic excitation into a charge separation. This subunit is found at the monomer-monomer interface and is required for correct PSII assembly and/or dimerization. The sequence is that of Photosystem II reaction center protein L from Bowenia serrulata (Byfield fern).